Reading from the N-terminus, the 423-residue chain is Glucoside xylosyltransferase 2 (423 aa).

Topologically, residues 1–6 are cytoplasmic; it reads MRFRWK. A helical; Signal-anchor for type II membrane protein membrane pass occupies residues 7–26; the sequence is FFGSLLCVTGLLLVLYRQLG. Over 27–423 the chain is Lumenal; the sequence is NVPQPPPGPA…RVVVHIRSDV (397 aa). The tract at residues 60-85 is disordered; it reads RRDARQGGKKKTNWNNVRAPEQKPNP. Asn-215 and Asn-256 each carry an N-linked (GlcNAc...) asparagine glycan.

This sequence belongs to the glycosyltransferase 8 family.

It is found in the membrane. The enzyme catalyses 3-O-(beta-D-glucosyl)-L-seryl-[EGF-like domain protein] + UDP-alpha-D-xylose = 3-O-[alpha-D-xylosyl-(1-&gt;3)-beta-D-glucosyl]-L-seryl-[EGF-like domain protein] + UDP + H(+). Glycosyltransferase which elongates the O-linked glucose attached to EGF-like repeats in the extracellular domain of Notch proteins by catalyzing the addition of xylose. This chain is Glucoside xylosyltransferase 2 (gxylt2), found in Xenopus laevis (African clawed frog).